A 117-amino-acid chain; its full sequence is DNA-binding protein RdgB (117 aa).

A DNA-binding region (H-T-H motif) is located at residues N82–R102.

Belongs to the c/mor transcriptional regulatory family.

In terms of biological role, regulates pectin lyase production in response to DNA damage. The protein is DNA-binding protein RdgB (rdgB) of Pectobacterium carotovorum subsp. carotovorum (Erwinia carotovora subsp. carotovora).